Here is a 1129-residue protein sequence, read N- to C-terminus: Tyrosine-protein kinase JAK2 (1129 aa).

Residues Pro-35–His-378 form the FERM domain. Tyr-117 carries the post-translational modification Phosphotyrosine; by autocatalysis. In terms of domain architecture, SH2; atypical spans His-399–Gln-480. Protein kinase domains lie at Leu-542–Phe-806 and Leu-846–Gln-1118. Leu-852–Val-860 serves as a coordination point for ATP. Tyr-865 is modified (phosphotyrosine; by autocatalysis). Lys-879 serves as a coordination point for ATP. Residues Tyr-963 and Tyr-969 each carry the phosphotyrosine; by autocatalysis modification. Residue Asp-973 is the Proton acceptor of the active site. A phosphotyrosine; by autocatalysis mark is found at Tyr-1004 and Tyr-1005.

This sequence belongs to the protein kinase superfamily. Tyr protein kinase family. JAK subfamily. Post-translationally, autophosphorylated, leading to regulate its activity.

It is found in the endomembrane system. It localises to the nucleus. It catalyses the reaction L-tyrosyl-[protein] + ATP = O-phospho-L-tyrosyl-[protein] + ADP + H(+). With respect to regulation, regulated by autophosphorylation, can both activate or decrease activity. Heme regulates its activity by enhancing the phosphorylation on Tyr-1004 and Tyr-1005. Non-receptor tyrosine kinase involved in various processes such as cell growth, development, differentiation or histone modifications. Mediates essential signaling events in both innate and adaptive immunity. In the cytoplasm, plays a pivotal role in signal transduction via its association with cytokine receptors. Following ligand-binding to cell surface receptors, phosphorylates specific tyrosine residues on the cytoplasmic tails of the receptor, creating docking sites for STATs proteins. Subsequently, phosphorylates the STATs proteins once they are recruited to the receptor. Phosphorylated STATs then form homodimer or heterodimers and translocate to the nucleus to activate gene transcription. For example, cell stimulation with erythropoietin (EPO) during erythropoiesis leads to JAK2 autophosphorylation, activation, and its association with erythropoietin receptor (EPOR) that becomes phosphorylated in its cytoplasmic domain. Then, STAT5 (STAT5A or STAT5B) is recruited, phosphorylated and activated by JAK2. Once activated, dimerized STAT5 translocates into the nucleus and promotes the transcription of several essential genes involved in the modulation of erythropoiesis. Part of a signaling cascade that is activated by increased cellular retinol and that leads to the activation of STAT5 (STAT5A or STAT5B). In the nucleus, plays a key role in chromatin by specifically mediating phosphorylation of 'Tyr-41' of histone H3 (H3Y41ph), a specific tag that promotes exclusion of CBX5 (HP1 alpha) from chromatin. Up-regulates the potassium voltage-gated channel activity of KCNA3. This chain is Tyrosine-protein kinase JAK2, found in Gallus gallus (Chicken).